Reading from the N-terminus, the 207-residue chain is Guanylate kinase (207 aa).

Residues Gly4–Arg184 form the Guanylate kinase-like domain. Ala11–Ser18 lines the ATP pocket.

Belongs to the guanylate kinase family.

The protein localises to the cytoplasm. The catalysed reaction is GMP + ATP = GDP + ADP. Functionally, essential for recycling GMP and indirectly, cGMP. This Salmonella paratyphi A (strain ATCC 9150 / SARB42) protein is Guanylate kinase.